The primary structure comprises 605 residues: MRPKKDGLEDFLRLTPEIKKQLGSLVSDYCNVLNKEFTAGSVEITLRSYKICKAFINEAKAHGREWGGLMATLNICNFWAILRNNRVRRRAENAGNDACSIACPIVMRYVLDHLIVVTDRFFIQAPSNRVMIPATIGTAMYKLLKHSRVRAYTYSKVLGVDRAAIMASGKQVVEHLNRMEKEGLLSSKFKAFCKWVFTYPVLEEMFQTMVSSKTGHLTDDVKDVRALIKTLPRASYSSHAGQRSYVSGVLPACLLSTKSKAVETPILVSGADRMDEELMGNDGGASHTEARYSESGQFHAFTDELESLPSPTMPLKPGAQSADCGDSSSSSSDSGNSDTEQSEREEARAEAPRLRAPKSRRTSRPNRGQTPCPSNAEEPEQPWIAAVHQESDERPIFPHPSKPTFLPPVKRKKGLRDSREGMFLPKPEAGSAISDVFEGREVCQPKRIRPFHPPGSPWANRPLPASLAPTPTGPVHEPVGSLTPAPVPRPLDPAPAVTPEASHLLEDPDEETSQAVKALREMADTVIPQKEEAAICGQMDLNHPPPRGHLDELTTTLESMTEDLNLDSPLTPELNEILDTFLNDECLLHAMHISTGLSIFDTSLF.

Disordered stretches follow at residues 307 to 381 (SLPS…EPEQ) and 447 to 509 (RIRP…EDPD). A compositionally biased stretch (low complexity) spans 321 to 338 (SADCGDSSSSSSDSGNSD). Residues 341 to 353 (QSEREEARAEAPR) show a composition bias toward basic and acidic residues. Basic residues predominate over residues 355 to 364 (RAPKSRRTSR).

It belongs to the herpesviridae Rta family. Interacts with human ATF7IP protein, leading to promote and regulate host genes in virus-infected cells. Interacts with RNA polymerase III complex; this interaction downregulates small RNA transcription and 5'-pppRNA production.

It localises to the host nucleus. It is found in the virion tegument. Immediate-early transcription factor that controls the initiation of viral lytic gene expression and lytic reactivation from latency. Triggers lytic replication, and initiates a cellular senescence program in epithelial cells. Up-regulates human DCR3/TNFRSF6B by directly binding to its receptor. Globally induces a proteasome-dependent loss of SUMOylated proteins in the host cell and the loss of promeylocytic leukemia nuclear bodies. Improves the stability of the triplex capsid protein TRX1 by reducing the ubiquitination level of the latter. Mediates evasion of inflammasome activation and antiviral responses (T- and NK cell activation) during EBV early lytic infection. This is Replication and transcription activator from Epstein-Barr virus (strain AG876) (HHV-4).